A 373-amino-acid chain; its full sequence is GTP cyclohydrolase 1 type 2 homolog (373 aa).

Positions 68, 69, 107, 333, and 336 each coordinate a divalent metal cation.

Belongs to the GTP cyclohydrolase I type 2/NIF3 family. In terms of assembly, homohexamer.

The protein is GTP cyclohydrolase 1 type 2 homolog (yqfO) of Bacillus subtilis (strain 168).